Reading from the N-terminus, the 201-residue chain is MININNNMKTIIILTIMILTIIIFTRTINGLQLEPVKFMNQKSGLIEIASNNLNLQSLTTSVKNGLIAKSVNLNDNFINSVSNEIYLALGVTNTNVQRMTWQVNIASNVGTMDVFYIEATIGEKFVVINFHTIQITQPMPQLYDVVEKCERTGSRRYGIAGPRARECRYHNVPRSLNTDELTLVTKTLESKVQEAIKIMLQ.

Residues 11 to 31 (IIILTIMILTIIIFTRTINGL) form a helical membrane-spanning segment.

It is found in the membrane. This is an uncharacterized protein from Acanthamoeba polyphaga mimivirus (APMV).